The following is a 530-amino-acid chain: Phosphoenolpyruvate carboxykinase (ATP) (530 aa).

Positions 58, 195, and 201 each coordinate substrate. ATP contacts are provided by residues Lys-201, His-220, and 236 to 244; that span reads GLSGTGKTT. Positions 201 and 220 each coordinate Mn(2+). Asp-257 contacts Mn(2+). ATP contacts are provided by residues Glu-285, Arg-321, 440–441, and Thr-446; that span reads RI. Arg-321 contacts substrate.

This sequence belongs to the phosphoenolpyruvate carboxykinase (ATP) family. Mn(2+) is required as a cofactor.

The protein resides in the cytoplasm. It carries out the reaction oxaloacetate + ATP = phosphoenolpyruvate + ADP + CO2. It functions in the pathway carbohydrate biosynthesis; gluconeogenesis. Its function is as follows. Involved in the gluconeogenesis. Catalyzes the conversion of oxaloacetate (OAA) to phosphoenolpyruvate (PEP) through direct phosphoryl transfer between the nucleoside triphosphate and OAA. This chain is Phosphoenolpyruvate carboxykinase (ATP), found in Staphylococcus epidermidis (strain ATCC 12228 / FDA PCI 1200).